We begin with the raw amino-acid sequence, 381 residues long: Homoserine O-succinyltransferase (381 aa).

The AB hydrolase-1 domain occupies 45-360 (NAVLVCHALN…PHGHDAFLLD (316 aa)). Residue Ser151 is the Nucleophile of the active site. Arg221 contacts substrate. Residues Asp321 and His354 contribute to the active site. Asp355 provides a ligand contact to substrate.

It belongs to the AB hydrolase superfamily. MetX family. In terms of assembly, homodimer.

It is found in the cytoplasm. It carries out the reaction L-homoserine + succinyl-CoA = O-succinyl-L-homoserine + CoA. The protein operates within amino-acid biosynthesis; L-methionine biosynthesis via de novo pathway; O-succinyl-L-homoserine from L-homoserine: step 1/1. Functionally, transfers a succinyl group from succinyl-CoA to L-homoserine, forming succinyl-L-homoserine. This chain is Homoserine O-succinyltransferase, found in Burkholderia thailandensis (strain ATCC 700388 / DSM 13276 / CCUG 48851 / CIP 106301 / E264).